The primary structure comprises 439 residues: MEKNVVKAEKNVEIVEFTFGPDEIAEAENEIVRYVNKNYTIPGFRKGKAPKRIIETFFGENFRDMVLEELSRKIEDTLKDEELFIPAVIADRKIEGDVAVFVVELHREPKVELKDYTGLELSVPKQEEVLANYVDNKLEELRNEAAIVEPKDGPAEIGDVINIEYTIEKDGKIIADHKTQEILIVEDDDRPIVTNVIGKKKGDIVEFDRTFENSNNKYHYKIEIKEVLKRTLMELNDEFAKSVASEVNTLEELKKKLEEEGLEAFESWKKDFLRQQVQDKLAELVELEISEKTLDYFVNRAIENAKKENTYDSYLKQAGSEEKLYEEFKTGILNELKKNTAIEKIAEKEQIEVTDEEVMKTAEELSTYWGISPERAKEIVKTREDIRNDIVENIRRTKVQDLIVEKATIKEISADEPVEEQKEEEEKEEAGSENSENKE.

The 76-residue stretch at 158 to 233 folds into the PPIase FKBP-type domain; sequence GDVINIEYTI…IKEVLKRTLM (76 aa). Residues 410 to 439 form a disordered region; the sequence is KEISADEPVEEQKEEEEKEEAGSENSENKE. A compositionally biased stretch (acidic residues) spans 414 to 428; that stretch reads ADEPVEEQKEEEEKE.

It belongs to the FKBP-type PPIase family. Tig subfamily.

The protein localises to the cytoplasm. It carries out the reaction [protein]-peptidylproline (omega=180) = [protein]-peptidylproline (omega=0). In terms of biological role, involved in protein export. Acts as a chaperone by maintaining the newly synthesized protein in an open conformation. Functions as a peptidyl-prolyl cis-trans isomerase. This chain is Trigger factor, found in Kosmotoga olearia (strain ATCC BAA-1733 / DSM 21960 / TBF 19.5.1).